Consider the following 273-residue polypeptide: GTP cyclohydrolase MptA (273 aa).

Belongs to the GTP cyclohydrolase IV family. In terms of assembly, homodimer. The cofactor is Fe(2+).

It carries out the reaction GTP + H2O = 7,8-dihydroneopterin 2',3'-cyclic phosphate + formate + diphosphate + H(+). It participates in cofactor biosynthesis; 5,6,7,8-tetrahydromethanopterin biosynthesis. In terms of biological role, converts GTP to 7,8-dihydro-D-neopterin 2',3'-cyclic phosphate, the first intermediate in the biosynthesis of coenzyme methanopterin. The protein is GTP cyclohydrolase MptA of Picrophilus torridus (strain ATCC 700027 / DSM 9790 / JCM 10055 / NBRC 100828 / KAW 2/3).